The following is a 218-amino-acid chain: Glutathione S-transferase U22 (218 aa).

A2 carries the N-acetylalanine modification. Residues 3-82 enclose the GST N-terminal domain; that stretch reads DEVILLDFWP…YIDEVWSDKN (80 aa). Residues 13–14, 39–40, 53–54, and 66–67 contribute to the glutathione site; these read SP, DK, KI, and ES. One can recognise a GST C-terminal domain in the interval 88–208; the sequence is DPYQRAQARF…LHDSEKILAF (121 aa). At T149 the chain carries Phosphothreonine.

The protein belongs to the GST superfamily. Tau family.

The protein resides in the cytoplasm. It localises to the cytosol. The catalysed reaction is RX + glutathione = an S-substituted glutathione + a halide anion + H(+). In terms of biological role, may be involved in the conjugation of reduced glutathione to a wide number of exogenous and endogenous hydrophobic electrophiles and have a detoxification role against certain herbicides. In Arabidopsis thaliana (Mouse-ear cress), this protein is Glutathione S-transferase U22 (GSTU22).